Consider the following 535-residue polypeptide: Bifunctional purine biosynthesis protein PurH (535 aa).

The MGS-like domain maps to 6-151 (TRLPIRRALI…KNHKDVAIVV (146 aa)).

It belongs to the PurH family.

The enzyme catalyses (6R)-10-formyltetrahydrofolate + 5-amino-1-(5-phospho-beta-D-ribosyl)imidazole-4-carboxamide = 5-formamido-1-(5-phospho-D-ribosyl)imidazole-4-carboxamide + (6S)-5,6,7,8-tetrahydrofolate. It catalyses the reaction IMP + H2O = 5-formamido-1-(5-phospho-D-ribosyl)imidazole-4-carboxamide. It functions in the pathway purine metabolism; IMP biosynthesis via de novo pathway; 5-formamido-1-(5-phospho-D-ribosyl)imidazole-4-carboxamide from 5-amino-1-(5-phospho-D-ribosyl)imidazole-4-carboxamide (10-formyl THF route): step 1/1. It participates in purine metabolism; IMP biosynthesis via de novo pathway; IMP from 5-formamido-1-(5-phospho-D-ribosyl)imidazole-4-carboxamide: step 1/1. The protein is Bifunctional purine biosynthesis protein PurH of Pseudomonas entomophila (strain L48).